The following is an 805-amino-acid chain: Muscarinic acetylcholine receptor DM1 (805 aa).

The Extracellular portion of the chain corresponds to 1-100; sequence MEPVMSLALA…GFETKGPRYS (100 aa). Residues 27 to 43 show a composition bias toward low complexity; that stretch reads TSTTTTTTTTTSTTTTT. Residues 27-47 are disordered; sequence TSTTTTTTTTTSTTTTTASPA. Residues Asn65, Asn84, and Asn87 are each glycosylated (N-linked (GlcNAc...) asparagine). A helical membrane pass occupies residues 101–121; that stretch reads LASMVVMGFVAAILSTVTVAG. Topologically, residues 122 to 141 are cytoplasmic; that stretch reads NVMVMISFKIDKQLQTISNY. Residues 142-162 form a helical membrane-spanning segment; the sequence is FLFSLAIADFAIGAISMPLFA. Residues 163–177 are Extracellular-facing; it reads VTTILGYWPLGPIVC. Residues 178–198 form a helical membrane-spanning segment; that stretch reads DTWLALDYLASNASVLNLLII. The Cytoplasmic segment spans residues 199–220; that stretch reads SFDRYFSVTRPLTYRAKRTTNR. Residues 221–241 traverse the membrane as a helical segment; it reads AAVMIGAAWGISLLLWPPWIY. At 242 to 266 the chain is on the extracellular side; sequence SWPYIEGKRTVPKDECYIQFIETNQ. A helical transmembrane segment spans residues 267–287; that stretch reads YITFGTALAAFYFPVTIMCFL. Topologically, residues 288–718 are cytoplasmic; it reads YWRIWRETKK…KRQESKAAKT (431 aa). Disordered stretches follow at residues 302-322, 340-359, and 507-530; these read LPNL…SDEN, GNDH…DAES, and GNGN…VNGN. Composition is skewed to basic and acidic residues over residues 308–318 and 341–353; these read GKKDSSKRSNS and NDHD…RSES. Positions 507–525 are enriched in low complexity; that stretch reads GNGNGAINNNNNASHNGNG. Residues 719-739 traverse the membrane as a helical segment; it reads LSAILLSFIITWTPYNILVLI. At 740 to 752 the chain is on the extracellular side; it reads KPLTTCSDCIPTE. A helical membrane pass occupies residues 753–773; the sequence is LWDFFYALCYINSTINPMCYA. Over 774-805 the chain is Cytoplasmic; that stretch reads LCNATFRRTYVRILTCKWHTRNREGMVRGVYN.

Belongs to the G-protein coupled receptor 1 family. Muscarinic acetylcholine receptor subfamily. Intense staining in the glomeruli of the antennal lobes, the region of the nervous system containing terminals of antennal olfactory sensory neurons and mechanosensory neurons. Also a discrete group of neurosecretory cells in the pars intercerebralis of the brain.

Its subcellular location is the cell membrane. The protein resides in the postsynaptic cell membrane. The muscarinic acetylcholine receptor mediates various cellular responses, including inhibition of adenylate cyclase, breakdown of phosphoinositides and modulation of potassium channels through the action of G proteins. Primary transducing effect is Pi turnover. May have a role in the processing of olfactory and mechanosensory signals; regulation of neurosecretion. This chain is Muscarinic acetylcholine receptor DM1 (mAChR-A), found in Drosophila melanogaster (Fruit fly).